A 413-amino-acid chain; its full sequence is DnaJ protein homolog xdj1 (413 aa).

The 68-residue stretch at 6 to 73 (KLYDILEVHF…ESREMYDMYG (68 aa)) folds into the J domain. The CR-type zinc-finger motif lies at 134–219 (GKEVKLRATR…CKGSGTVPEQ (86 aa)). 4 CXXCXGXG motif repeats span residues 147–154 (CPRCQGRG), 164–171 (CLSCDGKG), 191–198 (CDTCNGKG), and 207–214 (CKHCKGSG). C410 is subject to Cysteine methyl ester. C410 carries S-farnesyl cysteine lipidation. The propeptide at 411-413 (QAQ) is removed in mature form.

It localises to the endoplasmic reticulum membrane. The protein is DnaJ protein homolog xdj1 (xdj1) of Schizosaccharomyces pombe (strain 972 / ATCC 24843) (Fission yeast).